The sequence spans 445 residues: Ribosomal protein uS12 methylthiotransferase RimO (445 aa).

An MTTase N-terminal domain is found at 13-123 (PRVGFVSLGC…VMAAIHHHLP (111 aa)). The [4Fe-4S] cluster site is built by Cys22, Cys58, Cys87, Cys154, Cys158, and Cys161. The region spanning 140-377 (LTPKHYAYLK…MQQQEIISKQ (238 aa)) is the Radical SAM core domain. The TRAM domain maps to 380–445 (AVKKGQQLRV…DIHDLWTEKI (66 aa)).

This sequence belongs to the methylthiotransferase family. RimO subfamily. The cofactor is [4Fe-4S] cluster.

It is found in the cytoplasm. It catalyses the reaction L-aspartate(89)-[ribosomal protein uS12]-hydrogen + (sulfur carrier)-SH + AH2 + 2 S-adenosyl-L-methionine = 3-methylsulfanyl-L-aspartate(89)-[ribosomal protein uS12]-hydrogen + (sulfur carrier)-H + 5'-deoxyadenosine + L-methionine + A + S-adenosyl-L-homocysteine + 2 H(+). Catalyzes the methylthiolation of an aspartic acid residue of ribosomal protein uS12. This Nitrosomonas eutropha (strain DSM 101675 / C91 / Nm57) protein is Ribosomal protein uS12 methylthiotransferase RimO.